The chain runs to 325 residues: uncharacterized protein (325 aa).

The segment at 296-325 (QRTLSSSMEEADRPRRMSVTQPHLPPVPSA) is disordered.

Belongs to the NDRG family.

This is an uncharacterized protein from Caenorhabditis elegans.